A 1142-amino-acid polypeptide reads, in one-letter code: Enamelin (1142 aa).

The first 39 residues, 1–39 (MLVLRCRLGTSFPKLDNLVPKGKMKILLVFLGLLGNSVA), serve as a signal peptide directing secretion. Disordered regions lie at residues 88-193 (QYQM…ISNE), 214-326 (YYSE…PNIR), 398-671 (PANL…QNRW), 874-955 (CCAG…LRRN), 1020-1048 (VIGT…QQQR), and 1062-1092 (LAKH…PTEN). The segment covering 103 to 114 (HPRKSSAPKRHN) has biased composition (basic residues). 2 N-linked (GlcNAc...) asparagine glycosylation sites follow: Asn-114 and Asn-126. Positions 117–128 (DQTQETQKPNQT) are enriched in polar residues. The segment covering 140–162 (KQPSHNQPQPEEEAQPPQAFPPF) has biased composition (low complexity). The segment covering 170–186 (QQPPWQIPQRLPPPGYG) has biased composition (pro residues). 2 positions are modified to phosphoserine: Ser-191 and Ser-216. The segment covering 223 to 234 (DFEKPKEEDPPK) has biased composition (basic and acidic residues). Over residues 240 to 285 (TEPTANSTVTETNSTQPNPKGSQGGNDTSPTGNSTPGLNTGNNPPA) the composition is skewed to polar residues. N-linked (GlcNAc...) asparagine glycans are attached at residues Asn-245, Asn-252, Asn-265, and Asn-296. Over residues 429–442 (RNEKIQNPKEKPLG) the composition is skewed to basic and acidic residues. 3 stretches are compositionally biased toward polar residues: residues 452–470 (KNPT…NKSN), 507–516 (SDGQTQSQNL), and 531–544 (SETN…SSYQ). Asn-467 is a glycosylation site (N-linked (GlcNAc...) asparagine). N-linked (GlcNAc...) asparagine glycosylation occurs at Asn-534. Over residues 556-588 (AKEHFPAGRNTWDHQEISPPFKEDPGRQEEHLP) the composition is skewed to basic and acidic residues. The segment covering 652 to 661 (NEEDPVDPTG) has biased composition (acidic residues). Polar residues predominate over residues 924–934 (SPTSILPGQRN). Asn-934 carries an N-linked (GlcNAc...) asparagine glycan. Basic and acidic residues predominate over residues 935 to 951 (SSEKRESQNPFRDDVST). Asn-1040 carries an N-linked (GlcNAc...) asparagine glycan. Over residues 1068 to 1078 (STTGTPSSDGR) the composition is skewed to polar residues.

Post-translationally, phosphorylated by FAM20C in vitro. In terms of tissue distribution, expressed in tooth particularly in odontoblast, ameloblast and cementoblast.

The protein resides in the secreted. It is found in the extracellular space. The protein localises to the extracellular matrix. Functionally, involved in the mineralization and structural organization of enamel. Involved in the extension of enamel during the secretory stage of dental enamel formation. This is Enamelin (ENAM) from Homo sapiens (Human).